We begin with the raw amino-acid sequence, 332 residues long: Putative threonine dehydratase (332 aa).

Lysine 56 is subject to N6-(pyridoxal phosphate)lysine.

This sequence belongs to the serine/threonine dehydratase family. Pyridoxal 5'-phosphate is required as a cofactor.

The enzyme catalyses L-threonine = 2-oxobutanoate + NH4(+). The protein operates within amino-acid biosynthesis; L-isoleucine biosynthesis; 2-oxobutanoate from L-threonine: step 1/1. The chain is Putative threonine dehydratase from Sinorhizobium fredii (strain NBRC 101917 / NGR234).